The primary structure comprises 429 residues: Glutamyl-tRNA reductase (429 aa).

Residues 49–52 (TCNR), Ser-107, 112–114 (EPQ), and Gln-118 each bind substrate. The active-site Nucleophile is the Cys-50. 187-192 (GAGETI) lines the NADP(+) pocket.

The protein belongs to the glutamyl-tRNA reductase family. In terms of assembly, homodimer.

The enzyme catalyses (S)-4-amino-5-oxopentanoate + tRNA(Glu) + NADP(+) = L-glutamyl-tRNA(Glu) + NADPH + H(+). Its pathway is porphyrin-containing compound metabolism; protoporphyrin-IX biosynthesis; 5-aminolevulinate from L-glutamyl-tRNA(Glu): step 1/2. Functionally, catalyzes the NADPH-dependent reduction of glutamyl-tRNA(Glu) to glutamate 1-semialdehyde (GSA). The polypeptide is Glutamyl-tRNA reductase (Pseudomonas fluorescens (strain SBW25)).